The sequence spans 238 residues: Purine nucleoside phosphorylase DeoD-type (238 aa).

His5 serves as a coordination point for a purine D-ribonucleoside. Residues Gly21, Arg25, Arg44, and 88 to 91 each bind phosphate; that span reads RIGS. A purine D-ribonucleoside is bound by residues 180–182 and 204–205; these read EME and SD. Residue Asp205 is the Proton donor of the active site.

It belongs to the PNP/UDP phosphorylase family. Homohexamer; trimer of homodimers.

The catalysed reaction is a purine D-ribonucleoside + phosphate = a purine nucleobase + alpha-D-ribose 1-phosphate. It catalyses the reaction a purine 2'-deoxy-D-ribonucleoside + phosphate = a purine nucleobase + 2-deoxy-alpha-D-ribose 1-phosphate. Functionally, catalyzes the reversible phosphorolytic breakdown of the N-glycosidic bond in the beta-(deoxy)ribonucleoside molecules, with the formation of the corresponding free purine bases and pentose-1-phosphate. The protein is Purine nucleoside phosphorylase DeoD-type of Xenorhabdus nematophila (strain ATCC 19061 / DSM 3370 / CCUG 14189 / LMG 1036 / NCIMB 9965 / AN6).